Consider the following 126-residue polypeptide: Fluoride-specific ion channel FluC (126 aa).

The next 4 helical transmembrane spans lie at 1–21 (MTATAFVAIGGGIGAVLRFHA), 33–53 (AVFPWGTFAINVVGSLLMGVL), 72–92 (VGVLGGFTTFSAFSLETALLV), and 97–117 (IGLAALYAAGSVVAGVTGLFL). Na(+)-binding residues include Gly-76 and Thr-79.

This sequence belongs to the fluoride channel Fluc/FEX (TC 1.A.43) family.

It localises to the cell inner membrane. The enzyme catalyses fluoride(in) = fluoride(out). Na(+) is not transported, but it plays an essential structural role and its presence is essential for fluoride channel function. Functionally, fluoride-specific ion channel. Important for reducing fluoride concentration in the cell, thus reducing its toxicity. This is Fluoride-specific ion channel FluC from Novosphingobium aromaticivorans (strain ATCC 700278 / DSM 12444 / CCUG 56034 / CIP 105152 / NBRC 16084 / F199).